The sequence spans 572 residues: Phosphoglucomutase-1 (572 aa).

Substrate is bound by residues Thr23, Arg27, 120-121 (SH), and Lys133. Ser120 (phosphoserine intermediate) is an active-site residue. Ser120 provides a ligand contact to Mg(2+). Positions 288, 290, and 292 each coordinate Mg(2+). Substrate contacts are provided by residues 292-293 (DR), Thr356, 375-377 (EES), Lys388, and Arg524.

This sequence belongs to the phosphohexose mutase family. Requires Mg(2+) as cofactor.

The protein localises to the cytoplasm. The catalysed reaction is alpha-D-glucose 1-phosphate = alpha-D-glucose 6-phosphate. Its function is as follows. This enzyme participates in both the breakdown and synthesis of glucose. The polypeptide is Phosphoglucomutase-1 (pgmA) (Dictyostelium discoideum (Social amoeba)).